A 614-amino-acid chain; its full sequence is Asparagine synthetase [glutamine-hydrolyzing] 3 (614 aa).

Catalysis depends on C2, which acts as the For GATase activity. One can recognise a Glutamine amidotransferase type-2 domain in the interval 2–216 (CGITGWVDFK…PAHALTFSKD (215 aa)). L-glutamine-binding positions include 50–54 (RLAVV), 77–79 (NGE), and D102. An ATP-binding site is contributed by 377–378 (SG).

This sequence belongs to the asparagine synthetase family.

The enzyme catalyses L-aspartate + L-glutamine + ATP + H2O = L-asparagine + L-glutamate + AMP + diphosphate + H(+). Its pathway is amino-acid biosynthesis; L-asparagine biosynthesis; L-asparagine from L-aspartate (L-Gln route): step 1/1. In terms of biological role, asparagine synthetase involved in sporulation. The chain is Asparagine synthetase [glutamine-hydrolyzing] 3 (asnO) from Bacillus subtilis (strain 168).